A 509-amino-acid chain; its full sequence is 2,3-bisphosphoglycerate-independent phosphoglycerate mutase (509 aa).

2 residues coordinate Mn(2+): Asp14 and Ser64. The Phosphoserine intermediate role is filled by Ser64. Residues His125, 155–156 (RD), Arg187, Arg193, 259–262 (RADR), and Lys332 contribute to the substrate site. 5 residues coordinate Mn(2+): Asp399, His403, Asp440, His441, and His459.

The protein belongs to the BPG-independent phosphoglycerate mutase family. In terms of assembly, monomer. The cofactor is Mn(2+).

The enzyme catalyses (2R)-2-phosphoglycerate = (2R)-3-phosphoglycerate. It functions in the pathway carbohydrate degradation; glycolysis; pyruvate from D-glyceraldehyde 3-phosphate: step 3/5. In terms of biological role, catalyzes the interconversion of 2-phosphoglycerate and 3-phosphoglycerate. The protein is 2,3-bisphosphoglycerate-independent phosphoglycerate mutase of Psychromonas ingrahamii (strain DSM 17664 / CCUG 51855 / 37).